The following is a 1039-amino-acid chain: Tetratricopeptide repeat protein 1 (1039 aa).

TPR repeat units follow at residues 51 to 84, 175 to 208, 210 to 243, 251 to 288, 326 to 359, 361 to 393, 437 to 469, 514 to 547, 634 to 667, 701 to 734, 737 to 770, and 799 to 832; these read REFWTKFAHEYYIRGLREQAILILKSGLETLKDS, ILGFLGKARILYAKGNYRSALKLYQRALVSNPQF, PDPRIGIGLCFWNLDMKTDALSAWTRVQQLDPKN, GLYYYDLAFQNVNNDSFVQNYGKALQHIQRAFKTRNND, ADGYYWMGRAYHQMGNNEKAMASYQKAKAADDRH, LSSVGIGQIQILQNDLTSAKLTFERIAEQNQSC, SDLYITQARLWEKEDTKKSLGFLTRALDFLESA, LLLDYNLARCEEELGNTSVASEAYVSILEKHPSF, EFRVHNDREKLKRQKLYIKAIQSYDQAIKFDPKN, ATTLINIGNCLAELKQFSRAIEVFETVYSSTGES, YGVLSCLGRVWLQRGRESKNVDYLKESVRYATLA, and PENSRTVEDLNFAMQQLDASIETFTKLVSVEHPP. A coiled-coil region spans residues 838-929; that stretch reads IEQRAKMAKN…SQQKASEDDM (92 aa). The tract at residues 912–1039 is disordered; it reads EEVLEWRKSQ…LNLFSEEDEE (128 aa). Residues 927 to 936 are compositionally biased toward acidic residues; sequence DDMSLSDDEE. S930 and S932 each carry phosphoserine. Over residues 940–953 the composition is skewed to basic residues; it reads GKKKKKDRKKRKSK. S959, S961, S964, and S998 each carry phosphoserine. The segment covering 992-1006 has biased composition (acidic residues); that stretch reads YTFDQDSDAEGNQEE. The segment covering 1007-1018 has biased composition (basic and acidic residues); that stretch reads EVSRTIEEKQDN.

In terms of biological role, involved in promoting potassiumm ion uptake. The chain is Tetratricopeptide repeat protein 1 (tpr1) from Schizosaccharomyces pombe (strain 972 / ATCC 24843) (Fission yeast).